A 187-amino-acid chain; its full sequence is Bis(5'-nucleosyl)-tetraphosphatase, symmetrical (187 aa).

Residues 18–132 (RYQHTIGVME…IFLADYIEPN (115 aa)) form the HD domain. His-21 serves as a coordination point for ADP. The Fe cation site is built by His-21, His-50, and Asp-51. Residues 51 to 54 (DYAK), His-83, 109 to 110 (HT), Asp-127, Arg-133, and 170 to 175 (PIYPDT) contribute to the ADP site. Asp-127 serves as a coordination point for Fe cation.

It belongs to the Ap4A hydrolase YqeK family. Homodimer.

The catalysed reaction is P(1),P(4)-bis(5'-adenosyl) tetraphosphate + H2O = 2 ADP + 2 H(+). Its function is as follows. Hydrolyzes diadenosine 5',5'''-P1,P4-tetraphosphate (Ap4A) to yield ADP. This Halalkalibacterium halodurans (strain ATCC BAA-125 / DSM 18197 / FERM 7344 / JCM 9153 / C-125) (Bacillus halodurans) protein is Bis(5'-nucleosyl)-tetraphosphatase, symmetrical.